We begin with the raw amino-acid sequence, 1458 residues long: DNA polymerase alpha catalytic subunit (1458 aa).

Disordered regions lie at residues 1 to 25 and 89 to 119; these read MSDS…RKEA and DLED…SVSK. Over residues 15–25 the composition is skewed to basic and acidic residues; that stretch reads EKTEKSGRKEA. 2 DNA-binding regions span residues 650–715 and 1241–1373; these read RINS…VHQI and QFRA…ACSK. Residues C1280, C1283, C1307, C1312, C1345, C1350, C1368, and C1371 each coordinate Zn(2+). A CysA-type zinc finger spans residues 1280–1310; that stretch reads CPKCGTENIYDNVFDGSGLQIEPGLKRCSKP. The CysB motif motif lies at 1345–1371; it reads CEEKTCQNRTRRLPLSFSRNGPICQAC.

Belongs to the DNA polymerase type-B family. The DNA polymerase alpha complex is composed of four subunits: the catalytic subunit POLA1, the regulatory subunit POLA2, and the small and the large primase subunits PRIM1 and PRIM2 respectively. Interacts with PARP1; this interaction functions as part of the control of replication fork progression. Interacts with MCM10 and WDHD1; these interactions recruit the polymerase alpha complex to the pre-replicative complex bound to DNA. Interacts with RPA1; this interaction stabilizes the replicative complex and reduces the misincorporation rate of DNA polymerase alpha by acting as a fidelity clamp.

The protein localises to the nucleus. The catalysed reaction is DNA(n) + a 2'-deoxyribonucleoside 5'-triphosphate = DNA(n+1) + diphosphate. Its function is as follows. Plays an essential role in the initiation of DNA replication. During the S phase of the cell cycle, the DNA polymerase alpha complex (composed of a catalytic subunit POLA1/p180, a regulatory subunit POLA2/p70 and two primase subunits PRIM1/p49 and PRIM2/p58) is recruited to DNA at the replicative forks via direct interactions with MCM10 and WDHD1. The primase subunit of the polymerase alpha complex initiates DNA synthesis by oligomerising short RNA primers on both leading and lagging strands. These primers are initially extended by the polymerase alpha catalytic subunit and subsequently transferred to polymerase delta and polymerase epsilon for processive synthesis on the lagging and leading strand, respectively. The reason this transfer occurs is because the polymerase alpha has limited processivity and lacks intrinsic 3' exonuclease activity for proofreading error, and therefore is not well suited for replicating long complexes. This is DNA polymerase alpha catalytic subunit (pola1) from Xenopus laevis (African clawed frog).